Here is a 916-residue protein sequence, read N- to C-terminus: Beta-scruin (916 aa).

6 Kelch repeats span residues 82–133, 134–187, 188–235, 237–289, 291–341, and 342–390; these read AVLI…YFHG, KVYL…IMDE, RIFV…NNEG, IYVV…TQNK, IWIW…KAGT, and QVFI…GIPV. A disordered region spans residues 393 to 426; sequence SPASDITTSKTTRSGSRKTQKTLKDKQQSDIHAR. The span at 414–425 shows a compositional bias: basic and acidic residues; that stretch reads TLKDKQQSDIHA. 6 Kelch repeats span residues 586–637, 638–691, 692–739, 741–793, 795–847, and 849–896; these read VIIA…YYRG, AIYV…VFND, SIYV…SHGG, LWVM…VCDD, IWLC…ALES, and LYLI…TIPP.

In terms of tissue distribution, sperm.

May have an enzymatic role. Found the acrosomal vesicle at the anterior of sperm but not in the acrosomal process. The protein is Beta-scruin of Limulus polyphemus (Atlantic horseshoe crab).